Here is an 85-residue protein sequence, read N- to C-terminus: Large ribosomal subunit protein bL27 (85 aa).

Positions 1 to 21 are disordered; the sequence is MAHKKAGGSTRNGRDSEGKRL.

The protein belongs to the bacterial ribosomal protein bL27 family.

In Hamiltonella defensa subsp. Acyrthosiphon pisum (strain 5AT), this protein is Large ribosomal subunit protein bL27.